Reading from the N-terminus, the 532-residue chain is 2,3-bisphosphoglycerate-independent phosphoglycerate mutase (532 aa).

2 residues coordinate Mn(2+): Asp13 and Ser63. The active-site Phosphoserine intermediate is the Ser63. Substrate-binding positions include His124, 154 to 155 (RD), Arg187, Arg193, 262 to 265 (RPDR), and Lys343. Mn(2+) is bound by residues Asp421, His425, Asp463, His464, and His481.

It belongs to the BPG-independent phosphoglycerate mutase family. Monomer. It depends on Mn(2+) as a cofactor.

It carries out the reaction (2R)-2-phosphoglycerate = (2R)-3-phosphoglycerate. It participates in carbohydrate degradation; glycolysis; pyruvate from D-glyceraldehyde 3-phosphate: step 3/5. Its function is as follows. Catalyzes the interconversion of 2-phosphoglycerate and 3-phosphoglycerate. The chain is 2,3-bisphosphoglycerate-independent phosphoglycerate mutase from Mesoplasma florum (strain ATCC 33453 / NBRC 100688 / NCTC 11704 / L1) (Acholeplasma florum).